The primary structure comprises 166 residues: Ribosome maturation factor RimM (166 aa).

The region spanning 95–164 (EEEYYAYELV…KKIIVKEELL (70 aa)) is the PRC barrel domain.

It belongs to the RimM family. Binds ribosomal protein uS19.

It is found in the cytoplasm. Its function is as follows. An accessory protein needed during the final step in the assembly of 30S ribosomal subunit, possibly for assembly of the head region. Essential for efficient processing of 16S rRNA. May be needed both before and after RbfA during the maturation of 16S rRNA. It has affinity for free ribosomal 30S subunits but not for 70S ribosomes. The chain is Ribosome maturation factor RimM from Aquifex aeolicus (strain VF5).